The chain runs to 181 residues: Glutamyl-tRNA(Gln) amidotransferase subunit C, chloroplastic/mitochondrial (181 aa).

This sequence belongs to the GatC family. As to quaternary structure, subunit of the heterotrimeric GatCAB amidotransferase (AdT) complex, composed of A, B and C subunits.

It is found in the mitochondrion. It localises to the plastid. The protein resides in the chloroplast. It catalyses the reaction L-glutamyl-tRNA(Gln) + L-glutamine + ATP + H2O = L-glutaminyl-tRNA(Gln) + L-glutamate + ADP + phosphate + H(+). Allows the formation of correctly charged Gln-tRNA(Gln) through the transamidation of misacylated Glu-tRNA(Gln) in chloroplasts and mitochondria. The reaction takes place in the presence of glutamine and ATP through an activated gamma-phospho-Glu-tRNA(Gln). This is Glutamyl-tRNA(Gln) amidotransferase subunit C, chloroplastic/mitochondrial from Picea sitchensis (Sitka spruce).